A 340-amino-acid polypeptide reads, in one-letter code: Mitotic checkpoint protein BUB3.1 (340 aa).

Positions M1–I20 are disordered. WD repeat units follow at residues P15 to E54, T96 to R135, L142 to Q179, D239 to Q278, and K281 to N324.

The protein belongs to the WD repeat BUB3 family. As to quaternary structure, part of the mitotic checkpoint complex (MCC); interacts with CDC20-1 and CDC20-2. Interacts with MAD2 and BUBR1. Expressed in actively dividing tissues, early in organ development, in young leaves, lateral root primordia and root meristems, flower buds, flowers and siliques.

It localises to the nucleus. Its subcellular location is the chromosome. The protein localises to the centromere. It is found in the kinetochore. The protein resides in the cytoplasm. It localises to the cytoskeleton. Its subcellular location is the phragmoplast. The protein localises to the spindle. In terms of biological role, has a dual function in spindle-assembly checkpoint signaling and in promoting the establishment of correct kinetochore-microtubule (K-MT) attachments. Promotes the formation of stable end-on bipolar attachments. Necessary for kinetochore localization of BUB1. The BUB1/BUB3 complex plays a role in the inhibition of anaphase-promoting complex or cyclosome (APC/C) when spindle-assembly checkpoint is activated and inhibits the ubiquitin ligase activity of APC/C by phosphorylating its activator CDC20. Essential for gametophyte development. The sequence is that of Mitotic checkpoint protein BUB3.1 (BUB3.1) from Arabidopsis thaliana (Mouse-ear cress).